The sequence spans 1070 residues: Duffy receptor (1070 aa).

Residues methionine 1–valine 20 form the signal peptide. Residues asparagine 21–lysine 1007 are Extracellular-facing. Positions tyrosine 116 to alanine 146 are disordered. Over residues glutamate 118–asparagine 142 the composition is skewed to basic and acidic residues. A glycan (N-linked (GlcNAc...) asparagine) is linked at asparagine 183. A pvRII region; mediates ACKR1 binding region spans residues asparagine 211 to threonine 521. Intrachain disulfides connect cysteine 217/cysteine 246 and cysteine 230/cysteine 237. 3 N-linked (GlcNAc...) asparagine glycosylation sites follow: asparagine 255, asparagine 351, and asparagine 420. Disulfide bonds link cysteine 300–cysteine 377, cysteine 415–cysteine 432, cysteine 427–cysteine 507, and cysteine 436–cysteine 505. 3 stretches are compositionally biased toward polar residues: residues asparagine 525–aspartate 542, threonine 554–lysine 569, and glycine 629–alanine 642. The disordered stretch occupies residues asparagine 525 to asparagine 906. Positions glutamate 697–lysine 711 are enriched in basic and acidic residues. Low complexity predominate over residues aspartate 712–threonine 728. Asparagine 715 is a glycosylation site (N-linked (GlcNAc...) asparagine). A compositionally biased stretch (basic and acidic residues) spans alanine 730–glycine 748. The N-linked (GlcNAc...) asparagine glycan is linked to asparagine 787. Positions leucine 808–threonine 817 are enriched in low complexity. N-linked (GlcNAc...) asparagine glycosylation is present at asparagine 825. Composition is skewed to basic and acidic residues over residues asparagine 835–serine 849 and alanine 865–phenylalanine 889. The segment covering serine 895–asparagine 906 has biased composition (low complexity). Residues asparagine 903 and asparagine 938 are each glycosylated (N-linked (GlcNAc...) asparagine). The chain crosses the membrane as a helical span at residues threonine 1008–serine 1025. Topologically, residues arginine 1026–serine 1070 are cytoplasmic.

In terms of assembly, homodimer; dimerization (via PvRII region) is promoted by the interaction with human ACKR1. Interacts (via PvRII region) with human ACKR1 (via N-terminal extracellular domain).

Its subcellular location is the membrane. In terms of biological role, binds to the human erythrocyte Duffy blood group determinant (ACKR1). The protein is Duffy receptor (PVDR) of Plasmodium vivax (strain Salvador I).